A 111-amino-acid chain; its full sequence is Large ribosomal subunit protein eL42 (111 aa).

4 residues coordinate Zn(2+): C12, C15, C72, and C77.

The protein belongs to the eukaryotic ribosomal protein eL42 family. In terms of assembly, component of the large ribosomal subunit.

It is found in the cytoplasm. In terms of biological role, component of the large ribosomal subunit. The ribosome is a large ribonucleoprotein complex responsible for the synthesis of proteins in the cell. This is Large ribosomal subunit protein eL42 (RPL36A) from Oryctolagus cuniculus (Rabbit).